A 271-amino-acid chain; its full sequence is Protein PXR1 (271 aa).

Residues 25 to 72 form the G-patch domain; that stretch reads TSRFGHQFLEKFGWKPGMGLGLSPMNSNTSHIKVSIKDDNVGLGAKLK. Positions 147–239 are disordered; the sequence is SNAKKRKREG…SASNIPDAVN (93 aa). The segment covering 157–168 has biased composition (acidic residues); it reads DDSEDEDDDDKE. Residues 175–203 are compositionally biased toward basic residues; the sequence is KKHKKHKKHKKDKKKDKKDKKEHKKHKKE. The segment covering 204–221 has biased composition (basic and acidic residues); it reads EKRLKKEKRAEKTKETKK. Residue serine 230 is modified to Phosphoserine.

This sequence belongs to the PINX1 family. As to quaternary structure, interacts with EST2.

The protein resides in the nucleus. It localises to the nucleolus. Its function is as follows. Involved in rRNA-processing at A0, A1 and A2 sites through its action in U18 and U24 snoRNA 3'-end final trimming. Negative regulator of telomerase through competition for binding to EST2 with TLC1. This Saccharomyces cerevisiae (strain ATCC 204508 / S288c) (Baker's yeast) protein is Protein PXR1 (PXR1).